The chain runs to 469 residues: Zinc transporter SLC39A7 (469 aa).

A helical transmembrane segment spans residues 10-30 (WVAVGLLTWATLGLLVAELGG). 2 stretches are compositionally biased toward basic and acidic residues: residues 42–56 (FHGH…DFHH) and 66–114 (HTHE…EHSR). Residues 42-121 (FHGHSHRHSH…HSRGGYGESG (80 aa)) are disordered. His-66 is subject to Pros-methylhistidine. Transmembrane regions (helical) follow at residues 138-158 (ALGA…LIPV), 169-189 (LQIL…LHLI), and 214-234 (GPIL…LVVE). Residues 242–263 (GGHGHSHGHGHAHSHTHGSHGH) show a composition bias toward basic residues. Positions 242–310 (GGHGHSHGHG…VRPQNAEEEK (69 aa)) are disordered. The segment covering 264 to 285 (GRQECSTKEKQSSEEEEKETRG) has biased composition (basic and acidic residues). 2 positions are modified to phosphoserine: Ser-275 and Ser-276. 3 helical membrane passes run 386-406 (LTAV…GGAV), 410-430 (IAGG…FIYV), and 448-468 (SLLE…IAHL).

It belongs to the ZIP transporter (TC 2.A.5) family. KE4/Catsup subfamily. Homodimer. Post-translationally, methylation at some His residue by METTL9 leads to reduced zinc-binding. Rapidly phosphorylated by CK2 following Zn(2+) treatment. This phosphorylation is required for efficient cytosolic Zn(2+) release.

It is found in the endoplasmic reticulum membrane. The protein resides in the golgi apparatus. Its subcellular location is the cis-Golgi network membrane. It carries out the reaction Zn(2+)(in) = Zn(2+)(out). In terms of biological role, transports Zn(2+) from the endoplasmic reticulum (ER)/Golgi apparatus to the cytosol, playing an essential role in the regulation of cytosolic zinc levels. Acts as a gatekeeper of zinc release from intracellular stores, requiring post-translational activation by phosphorylation, resulting in activation of multiple downstream pathways leading to cell growth and proliferation. Has an essential role in B cell development and is required for proper B cell receptor signaling. Plays an important role in maintaining intestinal epithelial homeostasis and skin dermis development by regulating ER function. Controls cell signaling pathways involved in glucose metabolism in skeletal muscle. Has a protective role against ER stress in different biological contexts. Mediates Zn(2+)-induced ferroptosis. This chain is Zinc transporter SLC39A7, found in Pongo abelii (Sumatran orangutan).